The chain runs to 699 residues: Elongation factor G (699 aa).

One can recognise a tr-type G domain in the interval 8 to 290; the sequence is ERYRNIGIMA…GVIEYLPSPV (283 aa). GTP contacts are provided by residues 17–24, 88–92, and 142–145; these read AHIDAGKT, DTPGH, and NKMD.

Belongs to the TRAFAC class translation factor GTPase superfamily. Classic translation factor GTPase family. EF-G/EF-2 subfamily.

Its subcellular location is the cytoplasm. Functionally, catalyzes the GTP-dependent ribosomal translocation step during translation elongation. During this step, the ribosome changes from the pre-translocational (PRE) to the post-translocational (POST) state as the newly formed A-site-bound peptidyl-tRNA and P-site-bound deacylated tRNA move to the P and E sites, respectively. Catalyzes the coordinated movement of the two tRNA molecules, the mRNA and conformational changes in the ribosome. The protein is Elongation factor G of Alkalilimnicola ehrlichii (strain ATCC BAA-1101 / DSM 17681 / MLHE-1).